The primary structure comprises 152 residues: Small ribosomal subunit protein uS15 (152 aa).

The segment covering 1–11 has biased composition (basic residues); it reads MARMHARRRGK. The disordered stretch occupies residues 1 to 25; the sequence is MARMHARRRGKSSSVRPARNEAPAW.

This sequence belongs to the universal ribosomal protein uS15 family. As to quaternary structure, part of the 30S ribosomal subunit.

The sequence is that of Small ribosomal subunit protein uS15 from Methanoregula boonei (strain DSM 21154 / JCM 14090 / 6A8).